The sequence spans 147 residues: Transthyretin (147 aa).

Residues 1–20 (MASRRLLLLCLAGLVLVTEA) form the signal peptide. Sulfocysteine is present on Cys-30. An L-thyroxine-binding site is contributed by Lys-35. A 4-carboxyglutamate modification is found at Glu-62. Glu-74 lines the L-thyroxine pocket. Asn-118 carries N-linked (GlcNAc...) asparagine glycosylation. Ser-137 contacts L-thyroxine.

This sequence belongs to the transthyretin family. In terms of assembly, homotetramer. Dimer of dimers. In the homotetramer, subunits assemble around a central channel that can accommodate two ligand molecules. Interacts with RBP4. In terms of processing, sulfonation of the reactive cysteine Cys-30 enhances the stability of the native conformation of TTR, avoiding misassembly of the protein leading to amyloid formation. As to expression, detected in serum (at protein level). Detected in liver.

The protein localises to the secreted. In terms of biological role, thyroid hormone-binding protein. Probably transports thyroxine from the bloodstream to the brain. The protein is Transthyretin (TTR) of Sorex araneus (Eurasian common shrew).